A 589-amino-acid polypeptide reads, in one-letter code: Isocitrate dehydrogenase kinase/phosphatase (589 aa).

Residues 322-328 (APGIRGL) and K343 contribute to the ATP site. The active site involves D378.

The protein belongs to the AceK family.

It is found in the cytoplasm. It carries out the reaction L-seryl-[isocitrate dehydrogenase] + ATP = O-phospho-L-seryl-[isocitrate dehydrogenase] + ADP + H(+). Its function is as follows. Bifunctional enzyme which can phosphorylate or dephosphorylate isocitrate dehydrogenase (IDH) on a specific serine residue. This is a regulatory mechanism which enables bacteria to bypass the Krebs cycle via the glyoxylate shunt in response to the source of carbon. When bacteria are grown on glucose, IDH is fully active and unphosphorylated, but when grown on acetate or ethanol, the activity of IDH declines drastically concomitant with its phosphorylation. This chain is Isocitrate dehydrogenase kinase/phosphatase, found in Azoarcus sp. (strain BH72).